Consider the following 249-residue polypeptide: 5'-nucleotidase SurE (249 aa).

Positions 8, 9, 39, and 91 each coordinate a divalent metal cation.

This sequence belongs to the SurE nucleotidase family. It depends on a divalent metal cation as a cofactor.

It localises to the cytoplasm. The enzyme catalyses a ribonucleoside 5'-phosphate + H2O = a ribonucleoside + phosphate. Its function is as follows. Nucleotidase that shows phosphatase activity on nucleoside 5'-monophosphates. The polypeptide is 5'-nucleotidase SurE (Pseudomonas paraeruginosa (strain DSM 24068 / PA7) (Pseudomonas aeruginosa (strain PA7))).